A 1125-amino-acid chain; its full sequence is Exportin-6 (1125 aa).

N-acetylalanine is present on Ala2. An Importin N-terminal domain is found at 31–97 (IEELLNNFAQ…RSCLPKLLLA (67 aa)). Ser199 is modified (phosphoserine). 2 positions are modified to phosphothreonine: Thr201 and Thr204. Phosphoserine is present on residues Ser208 and Ser224.

The protein belongs to the exportin family. In terms of assembly, found in a complex with XPO6, Ran, ACTB and PFN1. Interacts with ACTB. Interacts with ACTB in a RanGTP-dependent manner.

The protein localises to the nucleus. It is found in the cytoplasm. In terms of biological role, mediates the nuclear export of actin and profilin-actin complexes in somatic cells. This Homo sapiens (Human) protein is Exportin-6 (XPO6).